Consider the following 475-residue polypeptide: Gamma-aminobutyric acid receptor subunit gamma-2 (475 aa).

Residues 1-39 form the signal peptide; it reads MSSPNIWSTGSSVYSTPVFSQKMTLWILLLLSLYPGLTR. Topologically, residues 41–275 are extracellular; sequence KSDDDYEDYA…FDLSRRMGYF (235 aa). Residues Asn52 and Asn129 are each glycosylated (N-linked (GlcNAc...) asparagine). A disulfide bridge links Cys190 with Cys204. Asn247 is a glycosylation site (N-linked (GlcNAc...) asparagine). The helical transmembrane segment at 276–296 threads the bilayer; the sequence is TIQTYIPCTLIVVLSWVSFWI. The Cytoplasmic segment spans residues 297 to 302; that stretch reads NKDAVP. Residues 303-322 traverse the membrane as a helical segment; that stretch reads ARTSLGITTVLTMTTLSTIA. Over 323–334 the chain is Extracellular; the sequence is RKSLPKVSYVTA. Residues 335–359 form a helical membrane-spanning segment; sequence MDLFVSVCFIFVFSALVEYGTLHYF. Topologically, residues 360–451 are cytoplasmic; it reads VSNRKPSKDK…IHIRIAKMDS (92 aa). Position 382 is a phosphoserine; by PKC (Ser382). A helical membrane pass occupies residues 452–472; the sequence is YARIFFPTAFCLFNLVYWVSY. At 473 to 475 the chain is on the extracellular side; it reads LYL.

The protein belongs to the ligand-gated ion channel (TC 1.A.9) family. Gamma-aminobutyric acid receptor (TC 1.A.9.5) subfamily. GABRG2 sub-subfamily. Heteropentamer, formed by a combination of alpha (GABRA1-6), beta (GABRB1-3), gamma (GABRG1-3), delta (GABRD), epsilon (GABRE), rho (GABRR1-3), pi (GABRP) and theta (GABRQ) chains, each subunit exhibiting distinct physiological and pharmacological properties. Interacts with GABARAP. Interacts with KIF21B. Identified in a complex of 720 kDa composed of LHFPL4, NLGN2, GABRA1, GABRB2, GABRG2 and GABRB3. Interacts with LHFPL4. Interacts with SHISA7; interaction leads to the regulation of GABA(A) receptor trafficking, channel deactivation kinetics and pharmacology. In terms of processing, palmitoylated by ZDHHC3/GODZ; required for the accumulation of GABA(A) receptors at the postsynaptic membrane of inhibitory GABAergic synapses. Glycosylated.

The protein resides in the postsynaptic cell membrane. It is found in the cell membrane. Its subcellular location is the cell projection. The protein localises to the dendrite. It localises to the cytoplasmic vesicle membrane. The catalysed reaction is chloride(in) = chloride(out). Allosterically activated by benzodiazepines. Activated by pentobarbital. Inhibited by the antagonist bicuculline. Inhibited by zinc ions. Potentiated by histamine. Functionally, gamma subunit of the heteropentameric ligand-gated chloride channel gated by gamma-aminobutyric acid (GABA), a major inhibitory neurotransmitter in the brain. GABA-gated chloride channels, also named GABA(A) receptors (GABAAR), consist of five subunits arranged around a central pore and contain GABA active binding site(s) located at the alpha and beta subunit interface(s). When activated by GABA, GABAARs selectively allow the flow of chloride anions across the cell membrane down their electrochemical gradient. Gamma-2/GABRG2-containing GABAARs are found at both synaptic and extrasynaptic sites. Chloride influx into the postsynaptic neuron following GABAAR opening decreases the neuron ability to generate a new action potential, thereby reducing nerve transmission. GABAARs containing alpha-1 and beta-2 or -3 subunits exhibit synaptogenic activity; the gamma-2 subunit being necessary but not sufficient to induce rapid synaptic contacts formation. Extrasynaptic gamma-2-containing receptors contribute to the tonic GABAergic inhibition. GABAARs function also as histamine receptor where histamine binds at the interface of two neighboring beta subunits and potentiates GABA response in a gamma-2 subunit-controlled manner. The protein is Gamma-aminobutyric acid receptor subunit gamma-2 (GABRG2) of Bos taurus (Bovine).